The chain runs to 396 residues: 1-deoxy-D-xylulose 5-phosphate reductoisomerase (396 aa).

Positions 15, 16, 17, 18, 41, and 129 each coordinate NADPH. K130 is a 1-deoxy-D-xylulose 5-phosphate binding site. E131 serves as a coordination point for NADPH. D155 contributes to the Mn(2+) binding site. 1-deoxy-D-xylulose 5-phosphate-binding residues include S156, E157, S182, and H205. E157 contributes to the Mn(2+) binding site. G211 contacts NADPH. S218, N223, K224, and E227 together coordinate 1-deoxy-D-xylulose 5-phosphate. E227 lines the Mn(2+) pocket.

The protein belongs to the DXR family. It depends on Mg(2+) as a cofactor. Requires Mn(2+) as cofactor.

The catalysed reaction is 2-C-methyl-D-erythritol 4-phosphate + NADP(+) = 1-deoxy-D-xylulose 5-phosphate + NADPH + H(+). Its pathway is isoprenoid biosynthesis; isopentenyl diphosphate biosynthesis via DXP pathway; isopentenyl diphosphate from 1-deoxy-D-xylulose 5-phosphate: step 1/6. Catalyzes the NADPH-dependent rearrangement and reduction of 1-deoxy-D-xylulose-5-phosphate (DXP) to 2-C-methyl-D-erythritol 4-phosphate (MEP). The protein is 1-deoxy-D-xylulose 5-phosphate reductoisomerase of Xanthomonas campestris pv. campestris (strain B100).